A 690-amino-acid chain; its full sequence is Elongation factor G (690 aa).

A tr-type G domain is found at 8 to 283 (EDYRNFGIMA…AVVAYLPSPL (276 aa)). Residues 17-24 (AHIDAGKT), 81-85 (DTPGH), and 135-138 (NKMD) each bind GTP.

It belongs to the TRAFAC class translation factor GTPase superfamily. Classic translation factor GTPase family. EF-G/EF-2 subfamily.

It localises to the cytoplasm. Functionally, catalyzes the GTP-dependent ribosomal translocation step during translation elongation. During this step, the ribosome changes from the pre-translocational (PRE) to the post-translocational (POST) state as the newly formed A-site-bound peptidyl-tRNA and P-site-bound deacylated tRNA move to the P and E sites, respectively. Catalyzes the coordinated movement of the two tRNA molecules, the mRNA and conformational changes in the ribosome. The polypeptide is Elongation factor G (Nitrobacter winogradskyi (strain ATCC 25391 / DSM 10237 / CIP 104748 / NCIMB 11846 / Nb-255)).